The chain runs to 172 residues: Transmembrane protein 91 (172 aa).

At 1–97 (MDNSSIQELQ…SPLLPHDHLG (97 aa)) the chain is on the extracellular side. Residues 60–86 (GLGEPETPDFEDTLSSDSDSDDDGGDR) are disordered. Positions 65–83 (ETPDFEDTLSSDSDSDDDG) are enriched in acidic residues. The chain crosses the membrane as a helical span at residues 98–118 (LAVFSVLCCFWPVGIAAFCLA). Residues 119–139 (HKTNKAWAKGDVQGAGAASRR) lie on the Cytoplasmic side of the membrane. A helical transmembrane segment spans residues 140-160 (AFLLGVLAVGLGLCTYAAALV). The Extracellular portion of the chain corresponds to 161–172 (TLAAYLASRDPP).

The protein belongs to the CD225/Dispanin family.

Its subcellular location is the membrane. The polypeptide is Transmembrane protein 91 (Tmem91) (Mus musculus (Mouse)).